A 2498-amino-acid chain; its full sequence is Nuclear receptor corepressor 1 (2498 aa).

Disordered stretches follow at residues 1–38, 54–84, 134–169, and 198–223; these read MSSS…QQEY, IQQQ…SGYD, SEVK…SKLS, and QQQL…VEQK. 3 stretches are compositionally biased toward basic and acidic residues: residues 71–82, 134–148, and 204–213; these read PVSDRPQDRRSG, SEVK…KHES, and EAAKPPEPEK. Positions 154–304 are interaction with tbl1xr1-A; that stretch reads SGQPGDDQDA…REQNICQRYD (151 aa). A coiled-coil region spans residues 168-208; the sequence is LSKEELIQSMDRVDREIAKVEQQILKLKKKQQQLEEEAAKP. Positions 427–478 constitute an SANT 1 domain; the sequence is QFMNVWTDHEKEIFKEKFVRHPKNFGLIASYLERKNVSDCVLYYYLTKKNEN. Positions 483-493 are enriched in basic residues; that stretch reads VRRNYPKRRGR. Disordered stretches follow at residues 483-649, 668-912, 1075-1122, 1417-1436, 1470-1583, 1737-1851, and 1916-1990; these read VRRN…GSKS, NLLQ…FGSR, SLSD…GTPG, DLVS…IMEG, SWGV…QRES, PGTQ…AQES, and PQME…TAHT. Basic and acidic residues-rich tracts occupy residues 502–525 and 535–548; these read SQEE…KEDE and KEEL…KIDA. Positions 502 to 552 form a coiled coil; that stretch reads SQEEKEIEKVEEEKADRNDKKEDERREEEEKEEKEELREGAKDKIDAVAED. The span at 582–611 shows a compositional bias: low complexity; that stretch reads ASEAAAANAVTTATTAPVTTTSTATTVAPV. The span at 612–627 shows a compositional bias: pro residues; sequence PVAPPPEEPTPPPPPQ. The SANT 2 domain maps to 628–665; it reads EQSLVDHGRNWGAIAKMVGSKSESQCKNFYFNYKRRHN. Positions 689–699 are enriched in polar residues; that stretch reads QCDSIASTVSA. Acidic residues predominate over residues 700–719; sequence QEDDENEASNEEENPEDSEG. Low complexity-rich tracts occupy residues 727 to 738 and 761 to 774; these read ESAPSPSPAEAA and DAAS…SPSP. A compositionally biased stretch (basic and acidic residues) spans 854 to 863; sequence MERLMDRAEA. Polar residues-rich tracts occupy residues 872-891 and 1102-1122; these read QNIS…SATC and ATSS…GTPG. Over residues 1484 to 1501 the composition is skewed to basic and acidic residues; that stretch reads KMGERSKHEDTKSSDAIR. Residues 1505–1516 are compositionally biased toward polar residues; that stretch reads TSVVSSGPSVLR. Residues 1545 to 1558 show a composition bias toward low complexity; that stretch reads PSPMSRSSPMARSA. The stretch at 1765–1804 forms a coiled coil; it reads VSAERERERERERERDREREKEQRERESDRERERDRLAHA. Basic and acidic residues predominate over residues 1767–1802; it reads AERERERERERERDREREKEQRERESDRERERDRLA. Composition is skewed to low complexity over residues 1803–1813 and 1820–1835; these read HAAAAAAAASA and RPVS…RPSS. Residues 1842-1851 are compositionally biased toward polar residues; it reads PSPSVRAQES. A compositionally biased stretch (basic and acidic residues) spans 1921-1942; that stretch reads AKPKESKNDSARSEENLSRRNA. A compositionally biased stretch (low complexity) spans 1958 to 1980; it reads SPYTSSSFSSSKSQSQPSSAVYS. The CORNR box 1 signature appears at 2012 to 2016; the sequence is IDVII. The interval 2022–2109 is disordered; sequence SDKDGRERNS…SPPQQTIPGH (88 aa). Over residues 2031–2040 the composition is skewed to low complexity; the sequence is SQSSDASSSH. Residues 2043–2052 are compositionally biased toward basic and acidic residues; the sequence is HRYEAPRETI. Residues 2093–2106 are compositionally biased toward polar residues; that stretch reads RYRQQQESPPQQTI. The short motif at 2123-2127 is the CORNR box 2 element; the sequence is ICHII. Residues 2136–2145 show a composition bias toward low complexity; that stretch reads PVNQPLQQPP. The disordered stretch occupies residues 2136 to 2222; the sequence is PVNQPLQQPP…PISPPQAPML (87 aa). Polar residues predominate over residues 2146 to 2175; that stretch reads ASTFQSTNPTSTAVRTKASSRFSPESQVQP. Residues 2190-2209 are compositionally biased toward basic and acidic residues; it reads IPDKPRGRPGKSPDRGHISE. The CORNR box 3 signature appears at 2326–2330; it reads LEDII. Disordered stretches follow at residues 2344–2446 and 2464–2498; these read DHGV…YNPL and TSMT…DSDE. The span at 2353 to 2362 shows a compositional bias: polar residues; it reads QGNQSGTPNS. Positions 2380 to 2394 are enriched in basic residues; sequence HKQKLISKYGSRKTK. Composition is skewed to polar residues over residues 2464–2476 and 2489–2498; these read TSMT…QQSR and QYETLSDSDE.

It belongs to the N-CoR nuclear receptor corepressors family. As to quaternary structure, forms a large corepressor complex that contains sin3a/b, histone deacetylases hdac1 and hdac2, rbbp4 and possibly rbbp7. Interacts with the thyroid receptor (TR, composed of rxra and thrb) and the retinoid acid receptor (RAR, composed of rxra and rara) in the absence of ligand. Interacts with tbl1xr1-A and possibly tbl1xr1-B. Interacts with zbtb33/kaiso.

It is found in the nucleus. In terms of biological role, mediates transcriptional repression by certain nuclear receptors. Participates in complexes which promote histone deacetylation and the formation of repressive chromatin structures which may impede access by the basal transcription machinery. In association with hdac3, may play a role in the regulation of the circadian clock. This is Nuclear receptor corepressor 1 (ncor1) from Xenopus laevis (African clawed frog).